Consider the following 136-residue polypeptide: UPF0225 protein Mpe_A2093 (136 aa).

This sequence belongs to the UPF0225 family.

This Methylibium petroleiphilum (strain ATCC BAA-1232 / LMG 22953 / PM1) protein is UPF0225 protein Mpe_A2093.